We begin with the raw amino-acid sequence, 72 residues long: Translation initiation factor IF-1 (72 aa).

Residues Met1 to Arg72 enclose the S1-like domain.

Belongs to the IF-1 family. In terms of assembly, component of the 30S ribosomal translation pre-initiation complex which assembles on the 30S ribosome in the order IF-2 and IF-3, IF-1 and N-formylmethionyl-tRNA(fMet); mRNA recruitment can occur at any time during PIC assembly.

It is found in the cytoplasm. One of the essential components for the initiation of protein synthesis. Stabilizes the binding of IF-2 and IF-3 on the 30S subunit to which N-formylmethionyl-tRNA(fMet) subsequently binds. Helps modulate mRNA selection, yielding the 30S pre-initiation complex (PIC). Upon addition of the 50S ribosomal subunit IF-1, IF-2 and IF-3 are released leaving the mature 70S translation initiation complex. The polypeptide is Translation initiation factor IF-1 (Sodalis glossinidius (strain morsitans)).